The chain runs to 557 residues: Dihydroxy-acid dehydratase (557 aa).

Residue cysteine 50 participates in [2Fe-2S] cluster binding. Residue aspartate 82 participates in Mg(2+) binding. Position 123 (cysteine 123) interacts with [2Fe-2S] cluster. Mg(2+)-binding residues include aspartate 124 and lysine 125. An N6-carboxylysine modification is found at lysine 125. Cysteine 195 lines the [2Fe-2S] cluster pocket. Position 447 (glutamate 447) interacts with Mg(2+). Catalysis depends on serine 473, which acts as the Proton acceptor.

Belongs to the IlvD/Edd family. In terms of assembly, homodimer. Requires [2Fe-2S] cluster as cofactor. Mg(2+) is required as a cofactor.

The enzyme catalyses (2R)-2,3-dihydroxy-3-methylbutanoate = 3-methyl-2-oxobutanoate + H2O. It catalyses the reaction (2R,3R)-2,3-dihydroxy-3-methylpentanoate = (S)-3-methyl-2-oxopentanoate + H2O. It participates in amino-acid biosynthesis; L-isoleucine biosynthesis; L-isoleucine from 2-oxobutanoate: step 3/4. Its pathway is amino-acid biosynthesis; L-valine biosynthesis; L-valine from pyruvate: step 3/4. Functions in the biosynthesis of branched-chain amino acids. Catalyzes the dehydration of (2R,3R)-2,3-dihydroxy-3-methylpentanoate (2,3-dihydroxy-3-methylvalerate) into 2-oxo-3-methylpentanoate (2-oxo-3-methylvalerate) and of (2R)-2,3-dihydroxy-3-methylbutanoate (2,3-dihydroxyisovalerate) into 2-oxo-3-methylbutanoate (2-oxoisovalerate), the penultimate precursor to L-isoleucine and L-valine, respectively. The polypeptide is Dihydroxy-acid dehydratase (Burkholderia thailandensis (strain ATCC 700388 / DSM 13276 / CCUG 48851 / CIP 106301 / E264)).